Consider the following 159-residue polypeptide: 6,7-dimethyl-8-ribityllumazine synthase (159 aa).

Residues Phe22, 57–59 (TYE), and 81–83 (TII) contribute to the 5-amino-6-(D-ribitylamino)uracil site. 86–87 (ST) is a (2S)-2-hydroxy-3-oxobutyl phosphate binding site. His89 serves as the catalytic Proton donor. Position 114 (Met114) interacts with 5-amino-6-(D-ribitylamino)uracil. Residue Arg128 participates in (2S)-2-hydroxy-3-oxobutyl phosphate binding.

This sequence belongs to the DMRL synthase family. In terms of assembly, forms an icosahedral capsid composed of 60 subunits, arranged as a dodecamer of pentamers.

The catalysed reaction is (2S)-2-hydroxy-3-oxobutyl phosphate + 5-amino-6-(D-ribitylamino)uracil = 6,7-dimethyl-8-(1-D-ribityl)lumazine + phosphate + 2 H2O + H(+). Its pathway is cofactor biosynthesis; riboflavin biosynthesis; riboflavin from 2-hydroxy-3-oxobutyl phosphate and 5-amino-6-(D-ribitylamino)uracil: step 1/2. Its function is as follows. Catalyzes the formation of 6,7-dimethyl-8-ribityllumazine by condensation of 5-amino-6-(D-ribitylamino)uracil with 3,4-dihydroxy-2-butanone 4-phosphate. This is the penultimate step in the biosynthesis of riboflavin. In Buchnera aphidicola subsp. Schizaphis graminum (strain Sg), this protein is 6,7-dimethyl-8-ribityllumazine synthase.